Here is a 224-residue protein sequence, read N- to C-terminus: MAFYPLQIAGLVLGFFGLVGTIGTTLLPQWRVSAFIGSNIIIFERIWEGLWMNCIQQAMVTLQCKFYNSILALPPVLEAARALMCVAVALALVALIIGICGMKQLQCTGSSERVKAYLLGTSGVLFILTGIFVLIPVSWTANIIIRDFYDPTVHAGQKRELGGALFLGWATAAVLFIGGGLLCGYCCCNRKERWHRYPVPAYRVPQKDNQRNVTVPRKSSTSYV.

At 1–7 (MAFYPLQ) the chain is on the cytoplasmic side. A helical membrane pass occupies residues 8–28 (IAGLVLGFFGLVGTIGTTLLP). Residues 29 to 81 (QWRVSAFIGSNIIIFERIWEGLWMNCIQQAMVTLQCKFYNSILALPPVLEAAR) lie on the Extracellular side of the membrane. Residues 82–102 (ALMCVAVALALVALIIGICGM) form a helical membrane-spanning segment. The Cytoplasmic portion of the chain corresponds to 103-124 (KQLQCTGSSERVKAYLLGTSGV). The helical transmembrane segment at 125-145 (LFILTGIFVLIPVSWTANIII) threads the bilayer. Residues 146-164 (RDFYDPTVHAGQKRELGGA) lie on the Extracellular side of the membrane. The chain crosses the membrane as a helical span at residues 165-185 (LFLGWATAAVLFIGGGLLCGY). At 186–224 (CCCNRKERWHRYPVPAYRVPQKDNQRNVTVPRKSSTSYV) the chain is on the cytoplasmic side.

It belongs to the claudin family. As to quaternary structure, does not form homotypic polymeric strands and it is not sufficient to form tight junctions by its own. Interacts with OCLN. In terms of tissue distribution, expressed at high levels in the kidney and at mucher lower levels in the brain. In the kidney, expression gradually decreases from the proximal tubule downstream to the distal convoluted tubule. Expressed in the thin ascending limb of Henle's loop, as well as in the thick ascending limb of Henle's loop. In the distal convoluted tubules, expressed only in a few tubules. Not detected in the collecting duct. In the brain, expressed in blood vessels (at protein level).

The protein localises to the cell junction. Its subcellular location is the tight junction. It is found in the cell membrane. It catalyses the reaction chloride(in) = chloride(out). The enzyme catalyses hydrogencarbonate(in) = hydrogencarbonate(out). It carries out the reaction bromide(in) = bromide(out). The catalysed reaction is iodide(out) = iodide(in). It catalyses the reaction fluoride(in) = fluoride(out). The enzyme catalyses nitrate(in) = nitrate(out). It carries out the reaction thiocyanate(in) = thiocyanate(out). Its function is as follows. Channel-forming tight junction protein with selectivity for anions, including chloride and hydrogencarbonate, and for solutes smaller than 9 Angstrom in diameter. In the kidney proximal tubule, may be involved in quantitative reabsorption of filtered anions. Does not affect water permeability. The protein is Claudin-17 (Cldn17) of Mus musculus (Mouse).